The sequence spans 180 residues: Small ribosomal subunit protein bS21c (180 aa).

Residues 1–79 (MASTSSLLNF…PSLAFSNTLY (79 aa)) constitute a chloroplast transit peptide. Positions 14 to 45 (LFPSNTSLPPSSNPKFPNPNSLSSQQNSISIS) are enriched in low complexity. 2 disordered regions span residues 14-49 (LFPSNTSLPPSSNPKFPNPNSLSSQQNSISISSKKH) and 124-180 (NKQE…GAPF). Over residues 130–147 (KRKHREAAKRNSRRRRGP) the composition is skewed to basic residues. Residues 154-166 (GKEEATKVDKKED) show a composition bias toward basic and acidic residues.

In terms of assembly, component of the chloroplast small ribosomal subunit (SSU). Mature 70S chloroplast ribosomes of higher plants consist of a small (30S) and a large (50S) subunit. The 30S small subunit contains 1 molecule of ribosomal RNA (16S rRNA) and 24 different proteins. The 50S large subunit contains 3 rRNA molecules (23S, 5S and 4.5S rRNA) and 33 different proteins. bS21c binds directly to 16S ribosomal RNA.

It localises to the plastid. Its subcellular location is the chloroplast. Functionally, component of the chloroplast ribosome (chloro-ribosome), a dedicated translation machinery responsible for the synthesis of chloroplast genome-encoded proteins, including proteins of the transcription and translation machinery and components of the photosynthetic apparatus. This chain is Small ribosomal subunit protein bS21c (rps21), found in Spinacia oleracea (Spinach).